A 222-amino-acid polypeptide reads, in one-letter code: Superoxide dismutase [Mn], mitochondrial (222 aa).

A mitochondrion-targeting transit peptide spans 1-24 (MLCRAACSTSRKLVPALGSLGSRQ). Mn(2+) is bound at residue H50. The residue at position 58 (Y58) is a 3'-nitrotyrosine. An N6-acetyllysine; alternate mark is found at K68 and K75. N6-succinyllysine; alternate occurs at positions 68 and 75. H98 contacts Mn(2+). An N6-acetyllysine modification is found at K114. Residues K122 and K130 each carry the N6-acetyllysine; alternate modification. N6-succinyllysine; alternate occurs at positions 122 and 130. Mn(2+) is bound by residues D183 and H187. At K202 the chain carries N6-acetyllysine.

The protein belongs to the iron/manganese superoxide dismutase family. As to quaternary structure, homotetramer. Mn(2+) serves as cofactor. Nitrated under oxidative stress. Nitration coupled with oxidation inhibits the catalytic activity. Post-translationally, acetylation at Lys-122 decreases enzymatic activity. Deacetylated by SIRT3 upon exposure to ionizing radiations or after long fasting. In terms of processing, polyubiquitinated; leading to proteasomal degradation. Deubiquitinated by USP36 which increases protein stability.

The protein resides in the mitochondrion matrix. It catalyses the reaction 2 superoxide + 2 H(+) = H2O2 + O2. In terms of biological role, destroys superoxide anion radicals which are normally produced within the cells and which are toxic to biological systems. The polypeptide is Superoxide dismutase [Mn], mitochondrial (SOD2) (Equus caballus (Horse)).